A 478-amino-acid polypeptide reads, in one-letter code: Proton-coupled amino acid transporter 2 (478 aa).

Polar residues-rich tracts occupy residues 1-14 (MSVTKSARSPQVAT) and 26-37 (KLQSQDPSPANG). The segment at 1–46 (MSVTKSARSPQVATPLNLDLPESAKKLQSQDPSPANGSSSESSKKT) is disordered. The Cytoplasmic portion of the chain corresponds to 1 to 53 (MSVTKSARSPQVATPLNLDLPESAKKLQSQDPSPANGSSSESSKKTKGITGFQ). A helical transmembrane segment spans residues 54–74 (TLVHLVKGNMGTGILGLPLAV). Over 75–76 (KN) the chain is Extracellular. Residues 77–97 (AGILMGPLSLLVMGLIACHCM) form a helical membrane-spanning segment. Over 98-143 (HILVRCAQRFCHRLNKPFMDYGDTVMHGLAFSPNAWLQNHAHWGRR) the chain is Cytoplasmic. Residues 144 to 164 (VVSFFLIVTQLGFCCVYIVFL) traverse the membrane as a helical segment. Residues 165–192 (ADNLKQVVEAVNSTTISCHKNETVVLTP) lie on the Extracellular side of the membrane. Residues 193-213 (TMDSRLYMLSFLPVLGLLVFV) traverse the membrane as a helical segment. Over 214 to 217 (RNLR) the chain is Cytoplasmic. A helical membrane pass occupies residues 218-238 (VLTIFSLLANISMLVSLVIIA). Residues 239–259 (QYIIQEIPDASQLPLVASWKT) lie on the Extracellular side of the membrane. Residues 260–280 (YPLFFGTAIFSFESIGVVLPL) form a helical membrane-spanning segment. Over 281–292 (ENKMKDARGFPT) the chain is Cytoplasmic. Residues 293–313 (ILSLGMSIITTLYIAIGALGY) traverse the membrane as a helical segment. At 314 to 340 (LRFGDDIKASITLNLPNCWLYQSVKLL) the chain is on the extracellular side. The chain crosses the membrane as a helical span at residues 341–361 (YVVGILCTYALQFYVPAEIII). The Cytoplasmic portion of the chain corresponds to 362-374 (PLAVSQVSKRWAL). A helical membrane pass occupies residues 375 to 395 (PVDLSIRLALVCLTCMLAILI). Over 396 to 399 (PRLD) the chain is Extracellular. Residues 400–420 (LVLSLVGSVSSSALALIIPPL) form a helical membrane-spanning segment. The Cytoplasmic segment spans residues 421–441 (LEVVTYYGEGISPLTVTKDAL). A helical transmembrane segment spans residues 442–462 (ISILGFMGFVVGTYQALDELI). Residues 463–478 (KSGNSPALSNSTMFIQ) are Extracellular-facing.

The protein belongs to the amino acid/polyamine transporter 2 family. Expressed in spinal cord, brain, testis, lung, heart, colon, spleen, kidney and muscle. Found in neuronal cell bodies in the anterior horn, in spinal cord brain stem, cerebellum, hippocampus, hypothalamus, rhinencephalon, cerebral cortex, and olfactory bulb in the brain. Also expressed in bone and fat tissues.

The protein resides in the cell membrane. The protein localises to the endoplasmic reticulum membrane. It localises to the recycling endosome membrane. The enzyme catalyses glycine(in) + H(+)(in) = glycine(out) + H(+)(out). It carries out the reaction L-alanine(in) + H(+)(in) = L-alanine(out) + H(+)(out). It catalyses the reaction D-alanine(in) + H(+)(in) = D-alanine(out) + H(+)(out). The catalysed reaction is L-proline(out) + H(+)(out) = L-proline(in) + H(+)(in). The enzyme catalyses D-proline(out) + H(+)(out) = D-proline(in) + H(+)(in). It carries out the reaction 4-hydroxy-L-proline(in) + H(+)(in) = 4-hydroxy-L-proline(out) + H(+)(out). It catalyses the reaction L-serine(in) + H(+)(in) = L-serine(out) + H(+)(out). The catalysed reaction is D-serine(out) + H(+)(out) = D-serine(in) + H(+)(in). The enzyme catalyses beta-alanine(in) + H(+)(in) = beta-alanine(out) + H(+)(out). It carries out the reaction 4-aminobutanoate(in) + H(+)(in) = 4-aminobutanoate(out) + H(+)(out). It catalyses the reaction sarcosine(in) + H(+)(in) = sarcosine(out) + H(+)(out). The catalysed reaction is N,N-dimethylglycine(in) + H(+)(in) = N,N-dimethylglycine(out) + H(+)(out). In terms of biological role, electrogenic proton/amino acid symporter with a high selectivity for the small side chains amino acids glycine, alanine and proline, where both L- and D-enantiomers are transported. Extension of the backbone length, as in beta-alanine and 4-aminobutanoate or methylation of the amino group, as in sarcosine and N,N-dimethylglycine, are also tolerated but decrease transport efficiency. A free carboxyl group is preferred. The sequence is that of Proton-coupled amino acid transporter 2 from Mus musculus (Mouse).